The primary structure comprises 125 residues: Large ribosomal subunit protein uL22c (125 aa).

It belongs to the universal ribosomal protein uL22 family. As to quaternary structure, part of the 50S ribosomal subunit.

It localises to the plastid. Its subcellular location is the chloroplast. In terms of biological role, this protein binds specifically to 23S rRNA. Functionally, the globular domain of the protein is located near the polypeptide exit tunnel on the outside of the subunit, while an extended beta-hairpin is found that lines the wall of the exit tunnel in the center of the 70S ribosome. This is Large ribosomal subunit protein uL22c (rpl22) from Nymphaea alba (White water-lily).